We begin with the raw amino-acid sequence, 381 residues long: Na(+)/H(+) antiporter NhaA 1 (381 aa).

11 helical membrane passes run Gly-18–Ala-38, Ile-53–Leu-73, Ser-89–Leu-109, Gly-118–Gly-138, Val-147–Phe-167, Thr-170–Leu-190, Tyr-210–Ile-230, Pro-251–Ser-271, Phe-283–Ile-303, Ile-321–Leu-341, and Ile-348–Phe-368.

It belongs to the NhaA Na(+)/H(+) (TC 2.A.33) antiporter family.

Its subcellular location is the cell inner membrane. It carries out the reaction Na(+)(in) + 2 H(+)(out) = Na(+)(out) + 2 H(+)(in). In terms of biological role, na(+)/H(+) antiporter that extrudes sodium in exchange for external protons. The polypeptide is Na(+)/H(+) antiporter NhaA 1 (Flavobacterium johnsoniae (strain ATCC 17061 / DSM 2064 / JCM 8514 / BCRC 14874 / CCUG 350202 / NBRC 14942 / NCIMB 11054 / UW101) (Cytophaga johnsonae)).